A 243-amino-acid polypeptide reads, in one-letter code: Hydroxyacylglutathione hydrolase (243 aa).

Histidine 52, histidine 54, aspartate 56, histidine 57, histidine 108, aspartate 125, and histidine 163 together coordinate Zn(2+).

This sequence belongs to the metallo-beta-lactamase superfamily. Glyoxalase II family. As to quaternary structure, monomer. Zn(2+) is required as a cofactor.

The catalysed reaction is an S-(2-hydroxyacyl)glutathione + H2O = a 2-hydroxy carboxylate + glutathione + H(+). It functions in the pathway secondary metabolite metabolism; methylglyoxal degradation; (R)-lactate from methylglyoxal: step 2/2. Its function is as follows. Thiolesterase that catalyzes the hydrolysis of S-D-lactoyl-glutathione to form glutathione and D-lactic acid. The protein is Hydroxyacylglutathione hydrolase of Haemophilus influenzae (strain PittGG).